The following is a 378-amino-acid chain: Zinc finger protein DPF3 (378 aa).

A Glycyl lysine isopeptide (Lys-Gly) (interchain with G-Cter in SUMO2) cross-link involves residue lysine 99. Residues 145 to 193 (VLENDENVEEGNEEEDLEEDIPKRKNRTRGRARGSAGGRRRHDAASQED) form a disordered region. The span at 148 to 163 (NDENVEEGNEEEDLEE) shows a compositional bias: acidic residues. A compositionally biased stretch (basic residues) spans 168–186 (RKNRTRGRARGSAGGRRRH). A C2H2-type zinc finger spans residues 198–221 (YVCDICGKRYKNRPGLSYHYAHTH). Residues 225-254 (EEGDEAQDQETRSPPNHRNENHRPQKGPDG) are disordered. 2 PHD-type zinc fingers span residues 259–319 (NNYC…CKSC) and 316–366 (CKSC…CWEL). An interaction with HDGFL2 region spans residues 317 to 332 (KSCILCGTSENDDQLL). Phosphoserine is present on glycine 323.

This sequence belongs to the requiem/DPF family. In terms of assembly, component of the BAF complex, which includes at least actin (ACTB), ARID1A, ARID1B/BAF250, SMARCA2, SMARCA4/BRG1/BAF190A, ACTL6A/BAF53, ACTL6B/BAF53B, SMARCE1/BAF57, SMARCC1/BAF155, SMARCC2/BAF170, SMARCB1/SNF5/INI1, and one or more of SMARCD1/BAF60A, SMARCD2/BAF60B, or SMARCD3/BAF60C. In muscle cells, the BAF complex also contains DPF3. Interacts with acetylated histones H3 and H4. Component of neuron-specific chromatin remodeling complex (nBAF complex) composed of at least, ARID1A/BAF250A or ARID1B/BAF250B, SMARCD1/BAF60A, SMARCD3/BAF60C, SMARCA2/BRM/BAF190B, SMARCA4/BRG1/BAF190A, SMARCB1/BAF47, SMARCC1/BAF155, SMARCE1/BAF57, SMARCC2/BAF170, DPF1/BAF45B, DPF3/BAF45C, ACTL6B/BAF53B and actin. As to quaternary structure, interacts with HDGFL2, SMARCA4/BRG1/BAF190A, SMARCC1/BAF155 and SMARCD1/BAF60A. In terms of processing, phosphorylation at Ser-323 enhances its interaction with HDGFL2.

The protein resides in the nucleus. Its function is as follows. Belongs to the neuron-specific chromatin remodeling complex (nBAF complex). During neural development a switch from a stem/progenitor to a post-mitotic chromatin remodeling mechanism occurs as neurons exit the cell cycle and become committed to their adult state. The transition from proliferating neural stem/progenitor cells to post-mitotic neurons requires a switch in subunit composition of the npBAF and nBAF complexes. As neural progenitors exit mitosis and differentiate into neurons, npBAF complexes which contain ACTL6A/BAF53A and PHF10/BAF45A, are exchanged for homologous alternative ACTL6B/BAF53B and DPF1/BAF45B or DPF3/BAF45C subunits in neuron-specific complexes (nBAF). The npBAF complex is essential for the self-renewal/proliferative capacity of the multipotent neural stem cells. The nBAF complex along with CREST plays a role regulating the activity of genes essential for dendrite growth. Muscle-specific component of the BAF complex, a multiprotein complex involved in transcriptional activation and repression of select genes by chromatin remodeling (alteration of DNA-nucleosome topology). Specifically binds acetylated lysines on histone 3 and 4 (H3K14ac, H3K9ac, H4K5ac, H4K8ac, H4K12ac, H4K16ac). In the complex, it acts as a tissue-specific anchor between histone acetylations and methylations and chromatin remodeling. It thereby probably plays an essential role in heart and skeletal muscle development. Functionally, acts as a regulator of myogenesis in cooperation with HDGFL2. Mediates the interaction of HDGFL2 with the BAF complex. HDGFL2-DPF3a activate myogenic genes by increasing chromatin accessibility through recruitment of SMARCA4/BRG1/BAF190A (ATPase subunit of the BAF complex) to myogenic gene promoters. The protein is Zinc finger protein DPF3 (DPF3) of Homo sapiens (Human).